The sequence spans 1036 residues: Cellulose synthase-like protein D1 (1036 aa).

The tract at residues 1 to 99 (MASSPPKKTL…GGGDGPKMGN (99 aa)) is disordered. 2 stretches are compositionally biased toward polar residues: residues 9-19 (TLNSQSSSLSR) and 69-80 (NQPAGSSGSTSE). Positions 86 to 95 (NRGGGGGDGP) are enriched in gly residues. A run of 2 helical transmembrane segments spans residues 178–198 (ILSP…FFLW) and 208–228 (AMWL…SWIL). The active site involves Asp308. The tract at residues 626-665 (AMHVRTQSQASQTSQASDLESDTQPLNDDPDLGLPKKFGN) is disordered. The span at 631–642 (TQSQASQTSQAS) shows a compositional bias: low complexity. Asp741 is a catalytic residue. 6 helical membrane-spanning segments follow: residues 817 to 837 (IYPF…LCLF), 848 to 868 (IHFL…SLLE), 895 to 915 (LAAV…SFTL), 938 to 958 (GLFI…VIGA), 962 to 982 (IYSV…SLWV), and 1002 to 1022 (TIVY…WITI).

This sequence belongs to the glycosyltransferase 2 family. Plant cellulose synthase-like D subfamily.

It is found in the golgi apparatus membrane. In terms of biological role, thought to be a Golgi-localized beta-glycan synthase that polymerize the backbones of noncellulosic polysaccharides (hemicelluloses) of plant cell wall. The chain is Cellulose synthase-like protein D1 (CSLD1) from Arabidopsis thaliana (Mouse-ear cress).